We begin with the raw amino-acid sequence, 144 residues long: Methylglyoxal synthase (144 aa).

One can recognise an MGS-like domain in the interval 1-144 (MNIALIAHDE…EEEQRKFLTD (144 aa)). Substrate contacts are provided by residues His8, Lys12, 34 to 37 (TGTT), and 54 to 55 (SG). The Proton donor/acceptor role is filled by Asp60. Substrate is bound at residue His87.

Belongs to the methylglyoxal synthase family.

It carries out the reaction dihydroxyacetone phosphate = methylglyoxal + phosphate. Catalyzes the formation of methylglyoxal from dihydroxyacetone phosphate. The protein is Methylglyoxal synthase of Exiguobacterium sibiricum (strain DSM 17290 / CCUG 55495 / CIP 109462 / JCM 13490 / 255-15).